The chain runs to 585 residues: Aspartate--tRNA ligase (585 aa).

Residue glutamate 171 participates in L-aspartate binding. Residues glutamine 195–lysine 198 form an aspartate region. L-aspartate is bound at residue arginine 217. ATP contacts are provided by residues arginine 217 to glutamate 219 and glutamine 226. Residue histidine 448 coordinates L-aspartate. Glutamate 482 serves as a coordination point for ATP. Arginine 489 contacts L-aspartate. ATP is bound at residue glycine 534–arginine 537.

The protein belongs to the class-II aminoacyl-tRNA synthetase family. Type 1 subfamily. Homodimer.

It is found in the cytoplasm. It catalyses the reaction tRNA(Asp) + L-aspartate + ATP = L-aspartyl-tRNA(Asp) + AMP + diphosphate. Functionally, catalyzes the attachment of L-aspartate to tRNA(Asp) in a two-step reaction: L-aspartate is first activated by ATP to form Asp-AMP and then transferred to the acceptor end of tRNA(Asp). The protein is Aspartate--tRNA ligase of Histophilus somni (strain 129Pt) (Haemophilus somnus).